The following is a 133-amino-acid chain: MNYKVYATGNKIEKFYSDAIKEYQKRLNRFCNISFTNYKNPQQLPKQQIDKYYKIGILPSGKSLSSEELAEKIKELELSAKTDILIVIGNEEIPLNESISISPMEMSLGLASTILFEQLYRAYKILNNEPYHK.

Residues isoleucine 55, glycine 89, and 101-106 (ISPMEM) contribute to the S-adenosyl-L-methionine site.

The protein belongs to the RNA methyltransferase RlmH family. Homodimer.

The protein localises to the cytoplasm. The catalysed reaction is pseudouridine(1915) in 23S rRNA + S-adenosyl-L-methionine = N(3)-methylpseudouridine(1915) in 23S rRNA + S-adenosyl-L-homocysteine + H(+). In terms of biological role, specifically methylates the pseudouridine at position 1915 (m3Psi1915) in 23S rRNA. The chain is Ribosomal RNA large subunit methyltransferase H 1 from Thermoanaerobacter sp. (strain X514).